Consider the following 367-residue polypeptide: Inositol-3-phosphate synthase (367 aa).

At Ser2 the chain carries N-acetylserine. Residue Lys73 forms an Isoglutamyl lysine isopeptide (Lys-Gln) (interchain with Q-Cter in protein Pup) linkage. The NAD(+) site is built by Asp78, Ala137, Tyr157, Ser200, Asp235, and Lys248.

This sequence belongs to the myo-inositol 1-phosphate synthase family. NAD(+) is required as a cofactor. Pupylated at Lys-73 by the prokaryotic ubiquitin-like protein Pup, which leads to its degradation by the proteasome.

The catalysed reaction is D-glucose 6-phosphate = 1D-myo-inositol 3-phosphate. Its function is as follows. Key enzyme in myo-inositol biosynthesis pathway that catalyzes the conversion of glucose 6-phosphate to 1D-myo-inositol 3-phosphate in a NAD-dependent manner. This Mycobacterium tuberculosis (strain ATCC 25618 / H37Rv) protein is Inositol-3-phosphate synthase (ino1).